Consider the following 425-residue polypeptide: Glucan 1,3-beta-glucosidase (425 aa).

The signal sequence occupies residues 1 to 17; that stretch reads MLLTFAPIFLLISSIVA. Catalysis depends on E214, which acts as the Proton donor. 2 disulfide bridges follow: C301–C423 and C326–C352. The Nucleophile role is filled by K328.

This sequence belongs to the glycosyl hydrolase 5 (cellulase A) family.

The protein localises to the secreted. The enzyme catalyses Successive hydrolysis of beta-D-glucose units from the non-reducing ends of (1-&gt;3)-beta-D-glucans, releasing alpha-glucose.. Beta-glucanases participate in the metabolism of beta-glucan, the main structural component of the cell wall. It could also function biosynthetically as a transglycosylase. This chain is Glucan 1,3-beta-glucosidase (EXG1), found in Candida oleophila (Yeast).